The sequence spans 137 residues: Kunitz-type trypsin inhibitor alpha chain (137 aa).

A disulfide bridge links Cys40 with Cys86.

This sequence belongs to the protease inhibitor I3 (leguminous Kunitz-type inhibitor) family. In terms of assembly, heterodimer of an alpha and a beta chain linked by a disulfide bond.

Functionally, inhibition of trypsin. In Neltuma juliflora (Mesquite), this protein is Kunitz-type trypsin inhibitor alpha chain.